Consider the following 427-residue polypeptide: Glutamate-1-semialdehyde 2,1-aminomutase (427 aa).

Lysine 267 carries the N6-(pyridoxal phosphate)lysine modification.

It belongs to the class-III pyridoxal-phosphate-dependent aminotransferase family. HemL subfamily. In terms of assembly, homodimer. Pyridoxal 5'-phosphate serves as cofactor.

The protein resides in the cytoplasm. It catalyses the reaction (S)-4-amino-5-oxopentanoate = 5-aminolevulinate. The protein operates within porphyrin-containing compound metabolism; protoporphyrin-IX biosynthesis; 5-aminolevulinate from L-glutamyl-tRNA(Glu): step 2/2. This Geotalea uraniireducens (strain Rf4) (Geobacter uraniireducens) protein is Glutamate-1-semialdehyde 2,1-aminomutase.